The following is a 115-amino-acid chain: U3-lycotoxin-Ls1k (115 aa).

Residues 1–20 (MKFVLLFGVLLVALFSYSSA) form the signal peptide. Residues 21 to 44 (EMLDDFGQADEDELLSLIEKEEAR) constitute a propeptide that is removed on maturation. Cystine bridges form between Cys48–Cys63, Cys55–Cys72, Cys62–Cys87, and Cys74–Cys85.

This sequence belongs to the neurotoxin 19 (CSTX) family. 01 subfamily. Expressed by the venom gland.

The protein resides in the secreted. In Lycosa singoriensis (Wolf spider), this protein is U3-lycotoxin-Ls1k.